The chain runs to 632 residues: Biosynthetic arginine decarboxylase (632 aa).

At Lys101 the chain carries N6-(pyridoxal phosphate)lysine. Substrate is bound at residue 281-291; that stretch reads FDVGGGLGVDY.

The protein belongs to the Orn/Lys/Arg decarboxylase class-II family. SpeA subfamily. Mg(2+) is required as a cofactor. Requires pyridoxal 5'-phosphate as cofactor.

It catalyses the reaction L-arginine + H(+) = agmatine + CO2. Its pathway is amine and polyamine biosynthesis; agmatine biosynthesis; agmatine from L-arginine: step 1/1. Its function is as follows. Catalyzes the biosynthesis of agmatine from arginine. The protein is Biosynthetic arginine decarboxylase of Escherichia coli O157:H7 (strain EC4115 / EHEC).